A 355-amino-acid polypeptide reads, in one-letter code: Thiamine thiazole synthase, chloroplastic (355 aa).

A chloroplast-targeting transit peptide spans 1–42 (MAAMATTASSLLKTSFAGARLPAAARNPTVSVAPRTGGAICN). Substrate-binding positions include A96, 116–117 (EQ), G124, and V189. Residue C218 is modified to 2,3-didehydroalanine (Cys). Residues D220, H235, M287, and 297–299 (RMG) each bind substrate.

Belongs to the THI4 family. As to quaternary structure, homooctamer. The cofactor is Fe cation. In terms of processing, during the catalytic reaction, a sulfide is transferred from Cys-218 to a reaction intermediate, generating a dehydroalanine residue.

It is found in the plastid. The protein resides in the chloroplast. The enzyme catalyses [ADP-thiazole synthase]-L-cysteine + glycine + NAD(+) = [ADP-thiazole synthase]-dehydroalanine + ADP-5-ethyl-4-methylthiazole-2-carboxylate + nicotinamide + 3 H2O + 2 H(+). In terms of biological role, involved in biosynthesis of the thiamine precursor thiazole. Catalyzes the conversion of NAD and glycine to adenosine diphosphate 5-(2-hydroxyethyl)-4-methylthiazole-2-carboxylic acid (ADT), an adenylated thiazole intermediate. The reaction includes an iron-dependent sulfide transfer from a conserved cysteine residue of the protein to a thiazole intermediate. The enzyme can only undergo a single turnover, which suggests it is a suicide enzyme. May have additional roles in adaptation to various stress conditions and in DNA damage tolerance. Required fot thiamine accumulation and disease resistance toward the bacterial pathogen Xanthomonas oryzae pv oryzae (Xoo) and the fungal pathogen Magnaporthe oryzae. During infection by Xoo, functions positively in the defense pathway initiated by the resistance genes XA3 and XA26 by promoting thiamine synthesis. May function upstream of the defense-related proteins peroxidases, phenylalanine ammonia-lyases and pathogenesis-related proteins. Its function is as follows. (Microbial infection) During infection by Xanthomonas oryzae pv oryzae (Xoo), THI1 interacts with the type III effector virulence factor xadA from Xoo, which is an adhesin-like outer membrane protein. This probably attenuates the function of THI1 in defense response. This chain is Thiamine thiazole synthase, chloroplastic, found in Oryza sativa subsp. japonica (Rice).